The primary structure comprises 364 residues: Spermidine/putrescine import ATP-binding protein PotA (364 aa).

Positions 6–236 (IEIRQIYKSY…PANLHVAMFI (231 aa)) constitute an ABC transporter domain. An ATP-binding site is contributed by 38 to 45 (GPSGCGKT).

It belongs to the ABC transporter superfamily. Spermidine/putrescine importer (TC 3.A.1.11.1) family. As to quaternary structure, the complex is composed of two ATP-binding proteins (PotA), two transmembrane proteins (PotB and PotC) and a solute-binding protein (PotD).

It localises to the cell inner membrane. It catalyses the reaction ATP + H2O + polyamine-[polyamine-binding protein]Side 1 = ADP + phosphate + polyamineSide 2 + [polyamine-binding protein]Side 1.. In terms of biological role, part of the ABC transporter complex PotABCD involved in spermidine/putrescine import. Responsible for energy coupling to the transport system. The sequence is that of Spermidine/putrescine import ATP-binding protein PotA from Legionella pneumophila (strain Paris).